We begin with the raw amino-acid sequence, 468 residues long: Probable Xaa-Pro aminopeptidase PEPP (468 aa).

4 residues coordinate Mn(2+): D264, D275, E398, and E438.

The protein belongs to the peptidase M24B family. Requires Mn(2+) as cofactor.

It carries out the reaction Release of any N-terminal amino acid, including proline, that is linked to proline, even from a dipeptide or tripeptide.. Its function is as follows. Catalyzes the removal of a penultimate prolyl residue from the N-termini of peptides. This Paracoccidioides brasiliensis (strain Pb03) protein is Probable Xaa-Pro aminopeptidase PEPP (PEPP).